Consider the following 926-residue polypeptide: ABC transporter A family member 6 (926 aa).

6 helical membrane-spanning segments follow: residues 34–54 (LIVI…VFDS), 336–356 (ASLI…PVIL), 389–409 (FLAI…AIGL), 418–438 (TIQF…AFLV), 451–471 (VAYI…QFLI), and 525–545 (DEVF…TYYI). An ABC transporter domain is found at 610–847 (IVCDNLKKVY…YGGSYVLTIT (238 aa)). ATP is bound at residue 648–655 (GPNGAGKT).

Belongs to the ABC transporter superfamily. ABCA family. CPR flippase (TC 3.A.1.211) subfamily.

It localises to the membrane. The protein is ABC transporter A family member 6 (ABCA6) of Arabidopsis thaliana (Mouse-ear cress).